The following is a 24-amino-acid chain: Brevinin-1SY (24 aa).

A disulfide bridge links Cys18 with Cys24.

In terms of tissue distribution, expressed by the skin glands.

The protein resides in the secreted. Functionally, antibacterial activity against Gram-positive bacterium S.aureus and Gram-negative bacterium E.coli. The chain is Brevinin-1SY from Lithobates sylvaticus (Wood frog).